The following is a 208-amino-acid chain: ATP-dependent Clp protease proteolytic subunit (208 aa).

The Nucleophile role is filled by Ser106. His131 is an active-site residue.

This sequence belongs to the peptidase S14 family. In terms of assembly, fourteen ClpP subunits assemble into 2 heptameric rings which stack back to back to give a disk-like structure with a central cavity, resembling the structure of eukaryotic proteasomes.

The protein localises to the cytoplasm. It carries out the reaction Hydrolysis of proteins to small peptides in the presence of ATP and magnesium. alpha-casein is the usual test substrate. In the absence of ATP, only oligopeptides shorter than five residues are hydrolyzed (such as succinyl-Leu-Tyr-|-NHMec, and Leu-Tyr-Leu-|-Tyr-Trp, in which cleavage of the -Tyr-|-Leu- and -Tyr-|-Trp bonds also occurs).. Cleaves peptides in various proteins in a process that requires ATP hydrolysis. Has a chymotrypsin-like activity. Plays a major role in the degradation of misfolded proteins. In Dinoroseobacter shibae (strain DSM 16493 / NCIMB 14021 / DFL 12), this protein is ATP-dependent Clp protease proteolytic subunit.